The primary structure comprises 184 residues: Ribosome maturation factor RimM (184 aa).

The 81-residue stretch at serine 104 to phenylalanine 184 folds into the PRC barrel domain.

The protein belongs to the RimM family. As to quaternary structure, binds ribosomal protein uS19.

It is found in the cytoplasm. Its function is as follows. An accessory protein needed during the final step in the assembly of 30S ribosomal subunit, possibly for assembly of the head region. Essential for efficient processing of 16S rRNA. May be needed both before and after RbfA during the maturation of 16S rRNA. It has affinity for free ribosomal 30S subunits but not for 70S ribosomes. The chain is Ribosome maturation factor RimM from Vibrio atlanticus (strain LGP32) (Vibrio splendidus (strain Mel32)).